A 141-amino-acid polypeptide reads, in one-letter code: MINYYYETKFHLYNEFYFSKWIFFVVSKENKFIKELNFIFCDDQYLININNKYLNKNYYTDVITFDNSEDKNLDGDIFISIKRIKYNSLKFKKLFYDELKRVIIHAVLHLIGYKDKKETEKYIMSKKEDIYLFFLKKKYVC.

Positions 105, 109, and 115 each coordinate Zn(2+).

It belongs to the endoribonuclease YbeY family. Zn(2+) is required as a cofactor.

The protein resides in the cytoplasm. In terms of biological role, single strand-specific metallo-endoribonuclease involved in late-stage 70S ribosome quality control and in maturation of the 3' terminus of the 16S rRNA. In Karelsulcia muelleri (strain GWSS) (Sulcia muelleri), this protein is Endoribonuclease YbeY.